The sequence spans 609 residues: Large ribosomal subunit assembly factor BipA (609 aa).

The tr-type G domain occupies 3–198 (QNIRNIAIIA…AIIKYAPAPN (196 aa)). Residues 15-20 (DHGKTT) and 128-131 (NKID) each bind GTP.

The protein belongs to the TRAFAC class translation factor GTPase superfamily. Classic translation factor GTPase family. BipA subfamily. As to quaternary structure, monomer.

The protein resides in the cytoplasm. It carries out the reaction GTP + H2O = GDP + phosphate + H(+). Its function is as follows. A 50S ribosomal subunit assembly protein with GTPase activity, required for 50S subunit assembly at low temperatures, may also play a role in translation. Binds GTP and analogs. Binds the 70S ribosome between the 30S and 50S subunits, in a similar position as ribosome-bound EF-G; it contacts a number of ribosomal proteins, both rRNAs and the A-site tRNA. The chain is Large ribosomal subunit assembly factor BipA from Buchnera aphidicola subsp. Schizaphis graminum (strain Sg).